The chain runs to 403 residues: MESVGCCGDCRGSSVDPRSTFVLSNLAEVVERVLTFLPAKALLRVACVCRLWRECVRRVLRTHRSVTWISAGLAEASHLERHCLVRVVAEELENVRILPHTVLYMADSETFISLEECRGHKRARKRTSMETALALEKLFPKQCQVLGIVTPGIVVTPMGSGSNRPQEIEIGESGFALLFPQIEGIKIQPFHFIKDPKNLTLERHQLTEVGLLDNPELRVVLVFGYNCCKVGASNYLQQVVSTFSDMNIILAGGQVDNLSSLTSEKNPLDIDASGVVGLSFSGHRIQSATVLLNEDVSDEKTAEAAMQRLRAANIPEQNTIGFMFACVGRGFQYYRAKGNVEADAFRKFFPSVPLFGFFGNGEIGCDRIVTGNFILRKCNEVKDDDLFHSYTTIMALIHLGSSK.

Met1 is subject to N-acetylmethionine. The F-box domain occupies 19–71 (STFVLSNLAEVVERVLTFLPAKALLRVACVCRLWRECVRRVLRTHRSVTWISA). Ser128 carries the post-translational modification Phosphoserine. The residue at position 194 (Lys194) is an N6-acetyllysine.

Directly interacts with SKP1 and CUL1.

The protein localises to the cytoplasm. It localises to the myofibril. Its subcellular location is the sarcomere. The protein resides in the z line. Functionally, substrate-recognition component of the SCF (SKP1-CUL1-F-box protein)-type E3 ubiquitin ligase complex. Promotes the proteasome-dependent degradation of key sarcomeric proteins, such as alpha-actinin (ACTN2) and filamin-C (FLNC), essential for maintenance of normal contractile function. The protein is F-box only protein 22 (FBXO22) of Pongo abelii (Sumatran orangutan).